Consider the following 1430-residue polypeptide: Caskin-1 (1430 aa).

ANK repeat units follow at residues 48–77 (DGFS…AVDI), 81–110 (KGMR…AVNV), 114–143 (EGHI…NPCI), 147–176 (SGKT…CAAL), 188–217 (NGTS…DINR), and 220–249 (KSGT…NAQV). Phosphotyrosine is present on Tyr253. Positions 281-347 (SAALQVRATK…PSSLGEAIVK (67 aa)) constitute an SH3 domain. The interval 348-372 (RAGSRTGSEPSPPQGGGSLGPSAPP) is disordered. Phosphoserine is present on Ser358. The segment at 375-471 (IWVLRKPFAG…PKKLESSSAS (97 aa)) is CASK-binding. At Arg398 the chain carries Omega-N-methylarginine. Residues 421-430 (QKSVSESSPG) are compositionally biased toward polar residues. The disordered stretch occupies residues 421 to 472 (QKSVSESSPGDSPVKPPEGSSGAARSQPPAAHAGQVYGEQPPKKLESSSASE). 2 positions are modified to phosphoserine: Ser423 and Ser432. 2 SAM domains span residues 474–537 (KSAE…LNIP) and 543–607 (HKPA…LAEL). Phosphoserine is present on residues Ser635 and Ser648. Residues 667–679 (LSGPAEAGAAAAE) show a composition bias toward low complexity. 4 disordered regions span residues 667–1001 (LSGP…SAGS), 1015–1040 (GGGG…DPGR), 1055–1371 (GPDG…RQKL), and 1388–1407 (KIRQ…EKST). Over residues 683 to 711 (NHLPATPRTTSRQESSLSGRARHMSSSQE) the composition is skewed to polar residues. 2 positions are modified to phosphoserine: Ser722 and Ser727. Thr740 carries the post-translational modification Phosphothreonine. Ser790 is subject to Phosphoserine. Residues 847 to 859 (PPAPGPVPPPVPA) are compositionally biased toward pro residues. A phosphoserine mark is found at Ser890, Ser892, and Ser988. Residues 1027–1036 (GHPTPRPASP) are compositionally biased toward pro residues. Thr1066 carries the post-translational modification Phosphothreonine. Ser1068 carries the post-translational modification Phosphoserine. The segment covering 1147–1159 (DTVKRRPKAKEPD) has biased composition (basic and acidic residues). Pro residues predominate over residues 1190–1214 (PELPPPPPPAEPPPTDLMPLPPLPL). Ser1258 carries the phosphoserine modification. The residue at position 1267 (Thr1267) is a Phosphothreonine. Residues 1267–1282 (TPPPVSPKPPPPPTAP) are compositionally biased toward pro residues. Composition is skewed to low complexity over residues 1283–1298 (KPAK…SATP), 1308–1326 (PPAA…SASP), and 1344–1358 (PRAA…PVAS). Ser1362 carries the phosphoserine modification. Residues 1388–1406 (KIRQEDGQGPRPSSIEEKS) show a composition bias toward basic and acidic residues.

In terms of assembly, polymerizes, via the tandem SAM domains, to form long, 8 nM wide fibers, upon which other proteins can assemble. Binds the CaM kinase domain of CASK. Forms a ternary complex with CASK and LIN7A, LIN7B or LIN7C. Competes with APBA1 that forms a similar complex with CASK and LIN7 proteins. The tripartite complex CASKIN1/CASK/LIN7(A/B/C) binds the cytoplasmic tail of NRXN1. Expressed in brain. Localized primarily to the neuropil and enriched in synaptic areas (at protein level).

The protein localises to the cytoplasm. May link the scaffolding protein CASK to downstream intracellular effectors. The chain is Caskin-1 (Caskin1) from Rattus norvegicus (Rat).